Reading from the N-terminus, the 550-residue chain is Transcriptional repressor RHIT (550 aa).

Disordered regions lie at residues 1 to 67 (MSAD…ETRA), 174 to 200 (VQGK…VVEV), and 216 to 296 (KSFK…EGLA). Basic and acidic residues-rich tracts occupy residues 11 to 22 (AQDKERARETPG), 45 to 58 (ESPH…EPHP), and 187 to 200 (LGHE…VVEV). A KRAB domain is found at 124–193 (VTFEDMALYL…SRQLGHEEEE (70 aa)). A Glycyl lysine isopeptide (Lys-Gly) (interchain with G-Cter in SUMO2) cross-link involves residue Lys216. Basic and acidic residues predominate over residues 267–281 (DLPKTQEGHFPEQPR). Ser290 is modified (phosphoserine). 8 consecutive C2H2-type zinc fingers follow at residues 306–328 (YKCE…RRTH), 334–356 (YACT…QIIH), 362–384 (YTCP…QRIH), 390–412 (YVCD…QGTH), 418–440 (HKCP…QRTH), 446–468 (YPCP…NRTH), 474–496 (YHCL…QRTH), and 502–524 (YSCP…EKIH).

Belongs to the krueppel C2H2-type zinc-finger protein family.

The protein resides in the nucleus. Its function is as follows. Transcriptional repressor involved in regulating MPV17L expression. By regulating MPV17L expression, contributes to the regulation of genes involved in H(2)O(2) metabolism and the mitochondrial apoptotic cascade. The polypeptide is Transcriptional repressor RHIT (ZNF205) (Bos taurus (Bovine)).